A 697-amino-acid polypeptide reads, in one-letter code: Elongation factor G 2 (697 aa).

The region spanning 6 to 281 (TNYRNFGIFA…AVVDFLPNPT (276 aa)) is the tr-type G domain. GTP contacts are provided by residues 15–22 (AHVDAGKT), 79–83 (DTPGH), and 133–136 (NKLD).

It belongs to the TRAFAC class translation factor GTPase superfamily. Classic translation factor GTPase family. EF-G/EF-2 subfamily.

The protein localises to the cytoplasm. Catalyzes the GTP-dependent ribosomal translocation step during translation elongation. During this step, the ribosome changes from the pre-translocational (PRE) to the post-translocational (POST) state as the newly formed A-site-bound peptidyl-tRNA and P-site-bound deacylated tRNA move to the P and E sites, respectively. Catalyzes the coordinated movement of the two tRNA molecules, the mRNA and conformational changes in the ribosome. The sequence is that of Elongation factor G 2 from Trichodesmium erythraeum (strain IMS101).